The sequence spans 120 residues: MARDLEALERRKAKVRRAIRAAANGRPRLSVHRTSKHIYAQIIDDAKGETLVAASSLEKDLRSSLKTGADVEAAKAIGKLVAERATAKGVTAVVFDRGAYIYHGRVKALAEGAREGGLQF.

Belongs to the universal ribosomal protein uL18 family. As to quaternary structure, part of the 50S ribosomal subunit; part of the 5S rRNA/L5/L18/L25 subcomplex. Contacts the 5S and 23S rRNAs.

In terms of biological role, this is one of the proteins that bind and probably mediate the attachment of the 5S RNA into the large ribosomal subunit, where it forms part of the central protuberance. The polypeptide is Large ribosomal subunit protein uL18 (Azorhizobium caulinodans (strain ATCC 43989 / DSM 5975 / JCM 20966 / LMG 6465 / NBRC 14845 / NCIMB 13405 / ORS 571)).